Reading from the N-terminus, the 434-residue chain is Isocitrate lyase (434 aa).

Ser-91 to Trp-93 contributes to the substrate binding site. Asp-157 lines the Mg(2+) pocket. Cys-195 functions as the Proton acceptor in the catalytic mechanism. Residues Gly-196–His-197, Arg-232, Asn-317–Ser-321, and Thr-351 contribute to the substrate site.

It belongs to the isocitrate lyase/PEP mutase superfamily. Isocitrate lyase family. Homotetramer. It depends on Mg(2+) as a cofactor.

It carries out the reaction D-threo-isocitrate = glyoxylate + succinate. Its pathway is carbohydrate metabolism; glyoxylate cycle; (S)-malate from isocitrate: step 1/2. Involved in the metabolic adaptation in response to environmental changes. Catalyzes the reversible formation of succinate and glyoxylate from isocitrate, a key step of the glyoxylate cycle, which operates as an anaplerotic route for replenishing the tricarboxylic acid cycle during growth on fatty acid substrates. This Escherichia coli O6:H1 (strain CFT073 / ATCC 700928 / UPEC) protein is Isocitrate lyase (aceA).